Here is a 549-residue protein sequence, read N- to C-terminus: Glucose-6-phosphate isomerase (549 aa).

The active-site Proton donor is the Glu-355. Catalysis depends on residues His-386 and Lys-514.

Belongs to the GPI family.

The protein resides in the cytoplasm. It carries out the reaction alpha-D-glucose 6-phosphate = beta-D-fructose 6-phosphate. Its pathway is carbohydrate biosynthesis; gluconeogenesis. It functions in the pathway carbohydrate degradation; glycolysis; D-glyceraldehyde 3-phosphate and glycerone phosphate from D-glucose: step 2/4. In terms of biological role, catalyzes the reversible isomerization of glucose-6-phosphate to fructose-6-phosphate. This Pectobacterium carotovorum subsp. carotovorum (strain PC1) protein is Glucose-6-phosphate isomerase.